A 65-amino-acid polypeptide reads, in one-letter code: Metallothionein-like protein 3B (65 aa).

This sequence belongs to the metallothionein superfamily. Type 15 family. Expressed in leaves and rachis.

In terms of biological role, metallothioneins have a high content of cysteine residues that bind various heavy metals. This Oryza sativa subsp. japonica (Rice) protein is Metallothionein-like protein 3B (MT3B).